The chain runs to 129 residues: UPF0325 protein Spro_3794 (129 aa).

Belongs to the UPF0325 family.

This is UPF0325 protein Spro_3794 from Serratia proteamaculans (strain 568).